The primary structure comprises 172 residues: Putative phosphoesterase BC_1225 (172 aa).

The active-site Proton donor is the His34. Short sequence motifs (HXTX) lie at residues 34–37 (HITL) and 115–118 (HLTI). Residue His115 is the Proton acceptor of the active site.

The protein belongs to the 2H phosphoesterase superfamily. YjcG family.

This Bacillus cereus (strain ATCC 14579 / DSM 31 / CCUG 7414 / JCM 2152 / NBRC 15305 / NCIMB 9373 / NCTC 2599 / NRRL B-3711) protein is Putative phosphoesterase BC_1225.